A 211-amino-acid chain; its full sequence is MTPWLGLIVLLGSWSLGDWGAEACTCSPSHPQDAFCNSDIVIRAKVVGKKLVKEGPFGTLVYTIKQMKMYRGFTKMPHVQYIHTEASESLCGLKLEVNKYQYLLTGRVYDGKMYTGLCNFVERWDQLTLSQRKGLNYRYHLGCNCKIKSCYYLPCFVTSKNECLWTDMLSNFGYPGYQSKHYACIRQKGGYCSWYRGWAPPDKSIINATDP.

The first 23 residues, 1–23, serve as a signal peptide directing secretion; that stretch reads MTPWLGLIVLLGSWSLGDWGAEA. Cys24 provides a ligand contact to Zn(2+). Involved in metalloproteinase-binding stretches follow at residues 24–27 and 88–89; these read CTCS and ES. 6 disulfide bridges follow: Cys24–Cys91, Cys26–Cys118, Cys36–Cys143, Cys145–Cys192, Cys150–Cys155, and Cys163–Cys184. The region spanning 24–143 is the NTR domain; it reads CTCSPSHPQD…GLNYRYHLGC (120 aa). Residues 105 to 188 form a mediates interaction with EFEMP1 region; that stretch reads TGRVYDGKMY…SKHYACIRQK (84 aa). N-linked (GlcNAc...) asparagine glycosylation occurs at Asn207.

This sequence belongs to the protease inhibitor I35 (TIMP) family. In terms of assembly, interacts with EFEMP1. Interacts with KDR.

The protein resides in the secreted. It localises to the extracellular space. The protein localises to the extracellular matrix. In terms of biological role, mediates a variety of processes including matrix regulation and turnover, inflammation, and angiogenesis, through reversible inhibition of zinc protease superfamily enzymes, primarily matrix metalloproteinases (MMPs). Regulates extracellular matrix (ECM) remodeling through inhibition of matrix metalloproteinases (MMP) including MMP-1, MMP-2, MMP-3, MMP-7, MMP-9, MMP-13, MMP-14 and MMP-15. Additionally, modulates the processing of amyloid precursor protein (APP) and apolipoprotein E receptor ApoER2 by inhibiting two alpha-secretases ADAM10 and ADAM17. Functions as a tumor suppressor and a potent inhibitor of angiogenesis. Exerts its anti-angiogenic effect by directly interacting with vascular endothelial growth factor (VEGF) receptor-2/KDR, preventing its binding to the VEGFA ligand. Selectively induces apoptosis in angiogenic endothelial cells through a caspase-independent cell death pathway. Mechanistically, inhibits matrix-induced focal adhesion kinase PTK2 tyrosine phosphorylation and association with paxillin/PXN and disrupts the incorporation of ITGB3, PTK2 and PXN into focal adhesion contacts on the matrix. The polypeptide is Metalloproteinase inhibitor 3 (TIMP3) (Macaca mulatta (Rhesus macaque)).